The primary structure comprises 868 residues: V-set and immunoglobulin domain-containing protein 10-like (868 aa).

Residues 1 to 27 (MGLSWALLPFLLLAFRAELLALQPALG) form the signal peptide. Residues 26–52 (LGSQPPSASSSHSMGSSRDFVSNVSSS) show a composition bias toward low complexity. Residues 26 to 82 (LGSQPPSASSSHSMGSSRDFVSNVSSSQHPQPPGSEASAGIPDSNRFPQGLNSSHVP) are disordered. At 28 to 763 (SQPPSASSSH…QAGSDLSPGA (736 aa)) the chain is on the extracellular side. N48, N77, and N88 each carry an N-linked (GlcNAc...) asparagine glycan. Residues 71-80 (RFPQGLNSSH) show a composition bias toward polar residues. Disordered stretches follow at residues 96 to 154 (LSPD…SGSK) and 323 to 342 (WSRD…EPPR). Composition is skewed to polar residues over residues 99–108 (DVTSSETPPS) and 133–143 (PASQISVQTPD). Ig-like C2-type domains lie at 289-381 (PQLS…ADVS) and 389-474 (PVIR…SVFN). C311 and C365 are oxidised to a cystine. Residue N410 is glycosylated (N-linked (GlcNAc...) asparagine). A disulfide bridge links C415 with C458. N474, N628, and N637 each carry an N-linked (GlcNAc...) asparagine glycan. Residues 764 to 784 (IAGIVLGSLLGLALLAGLLIL) form a helical membrane-spanning segment. Residues 785–868 (CICCLRRYPG…PWTVRAATQV (84 aa)) lie on the Cytoplasmic side of the membrane.

It is found in the membrane. The sequence is that of V-set and immunoglobulin domain-containing protein 10-like (Vsig10l) from Mus musculus (Mouse).